A 78-amino-acid chain; its full sequence is Antitoxin FitA (78 aa).

Homodimer in the absence of FitB; forms a heterodimer with FitB; 4 FitAB heterodimers form a complex that binds to fitAB promoter DNA. The complex is also seen in solution.

In terms of biological role, antitoxin component of a type II toxin-antitoxin (TA) system. Plays a role in the speed with which bacteria traverse human epithelial cells; disruption of the locus increases the speed of trafficking about 2-4-fold. Binds to its own promoter, binding affinity of the FitAB complex is 20-30-fold higher than FitA alone. No nuclease activity was observed for the FitAB complex, perhaps because FitA (the antitoxin) prevents metal binding and thus catalysis by FitB. The sequence is that of Antitoxin FitA (fitA) from Neisseria gonorrhoeae (strain ATCC 700825 / FA 1090).